The sequence spans 268 residues: Taurine import ATP-binding protein TauB (268 aa).

Residues 4 to 236 enclose the ABC transporter domain; that stretch reads LAIRNISMRF…EGVDADLREV (233 aa). 41-48 contacts ATP; sequence GPSGCGKT.

It belongs to the ABC transporter superfamily. Taurine importer (TC 3.A.1.17.1) family. In terms of assembly, the complex is composed of two ATP-binding proteins (TauB), two transmembrane proteins (TauC) and a solute-binding protein (TauA).

Its subcellular location is the cell inner membrane. It carries out the reaction taurine(out) + ATP + H2O = taurine(in) + ADP + phosphate + H(+). Functionally, part of the ABC transporter complex TauABC involved in taurine import. Responsible for energy coupling to the transport system. This is Taurine import ATP-binding protein TauB from Jannaschia sp. (strain CCS1).